The primary structure comprises 48 residues: uncharacterized protein (48 aa).

This is an uncharacterized protein from Dictyostelium discoideum (Social amoeba).